A 933-amino-acid chain; its full sequence is Progesterone receptor (933 aa).

The AF3; mediates transcriptional activation stretch occupies residues 1–164 (MTELKAKGPR…PATQGVLSPL (164 aa)). Residues 1-256 (MTELKAKGPR…AAAGGGAAAV (256 aa)) form a disordered region. Residues 1-566 (MTELKAKGPR…YSFESLPQKI (566 aa)) form a modulating, Pro-Rich region. Serine 20 carries the phosphoserine modification. The LXXL motif 1 motif lies at 55–59 (LDGLL). Serine 81 carries the phosphoserine modification. The short motif at 115–119 (LDTLL) is the LXXL motif 2 element. A phosphoserine mark is found at serine 130 and serine 162. The mediates transcriptional transrepression stretch occupies residues 165-305 (MSRSGCKAGD…LATTMMDFIH (141 aa)). A Nuclear localization signal motif is present at residues 183–187 (KVLPR). Serine 190 and serine 213 each carry phosphoserine. Residues 220–231 (EVEEEDGSESEE) are compositionally biased toward acidic residues. The span at 232–246 (SAGPLLKGKPRALGG) shows a compositional bias: low complexity. Phosphoserine; by MAPK1 is present on serine 294. The segment covering 335-356 (AXSAFAPPRSSPSASSTPVAVG) has biased composition (low complexity). Residues 335–378 (AXSAFAPPRSSPSASSTPVAVGDFPDCAYPPDAEPKDDAYPLYS) form a disordered region. Serine 345 is subject to Phosphoserine; by MAPK. Lysine 388 participates in a covalent cross-link: Glycyl lysine isopeptide (Lys-Gly) (interchain with G-Cter in SUMO); alternate. Lysine 388 is covalently cross-linked (Glycyl lysine isopeptide (Lys-Gly) (interchain with G-Cter in ubiquitin); alternate). Phosphoserine; by CDK2 is present on serine 400. Residues 415-452 (PDFPLGPPPPLPPRAPPSRPGEAAVTAAPASASVSSAS) are disordered. Pro residues predominate over residues 418–433 (PLGPPPPLPPRAPPSR). Positions 434-452 (PGEAAVTAAPASASVSSAS) are enriched in low complexity. Residues 456-546 (STLECILYKA…VYPPYLNYLR (91 aa)) form an AF1; mediates transcriptional activation region. Residue lysine 531 forms a Glycyl lysine isopeptide (Lys-Gly) (interchain with G-Cter in SUMO) linkage. 2 NR C4-type zinc fingers span residues 567–587 (CLIC…CGSC) and 603–627 (CAGR…LRKC). Positions 567–639 (CLICGDEASG…AGMVLGGRKF (73 aa)) form a DNA-binding region, nuclear receptor. Serine 676 bears the Phosphoserine mark. An NR LBD domain is found at 679–913 (QDIQLIPPLI…EFPEMMSEVI (235 aa)). Residues 687 to 933 (LINLLMSIEP…MVKPLLFHKK (247 aa)) are AF2; mediates transcriptional activation. Residue arginine 766 participates in progesterone binding.

Belongs to the nuclear hormone receptor family. In terms of assembly, interacts with SMARD1 and UNC45A. Interacts with CUEDC2; the interaction promotes ubiquitination, decreases sumoylation, and represses transcriptional activity. Interacts with PIAS3; the interaction promotes sumoylation of PR in a hormone-dependent manner, inhibits DNA-binding, and alters nuclear export. Interacts with SP1; the interaction requires ligand-induced phosphorylation on Ser-345 by ERK1/2-MAPK. Interacts with PRMT2. Interacts with NCOA2 and NCOA1. Interacts with KLF9. Interacts with GTF2B. Phosphorylated on multiple serine sites. Several of these sites are hormone-dependent. Phosphorylation on Ser-294 is highly hormone-dependent and modulates ubiquitination and sumoylation on Lys-388. Phosphorylation on Ser-102 and Ser-345 requires induction by hormone. Basal phosphorylation on Ser-81, Ser-162, Ser-190 and Ser-400 is increased in response to progesterone and can be phosphorylated in vitro by the CDK2-A1 complex. Increased levels of phosphorylation on Ser-400 also in the presence of EGF, heregulin, IGF, PMA and FBS. Phosphorylation at this site by CDK2 is ligand-independent, and increases nuclear translocation and transcriptional activity. Phosphorylation at Ser-162 and Ser-294, but not at Ser-190, is impaired during the G(2)/M phase of the cell cycle. Phosphorylation on Ser-345 by ERK1/2 MAPK is required for interaction with SP1. In terms of processing, sumoylation is hormone-dependent and represses transcriptional activity. Sumoylation on all three sites is enhanced by PIAS3. Desumoylated by SENP1. Sumoylation on Lys-388, the main site of sumoylation, is repressed by ubiquitination on the same site, and modulated by phosphorylation at Ser-294. Post-translationally, ubiquitination is hormone-dependent and represses sumoylation on the same site. Promoted by MAPK-mediated phosphorylation on Ser-294. Ubiquitinated by UBR5, leading to its degradation: UBR5 specifically recognizes and binds ligand-bound PGR when it is not associated with coactivators (NCOAs). In presence of NCOAs, the UBR5-degron is not accessible, preventing its ubiquitination and degradation. Palmitoylated by ZDHHC7 and ZDHHC21. Palmitoylation is required for plasma membrane targeting and for rapid intracellular signaling via ERK and AKT kinases and cAMP generation.

It is found in the nucleus. The protein localises to the cytoplasm. Functionally, the steroid hormones and their receptors are involved in the regulation of eukaryotic gene expression and affect cellular proliferation and differentiation in target tissues. Transcriptional activator of several progesteron-dependent promoters in a variety of cell types. Involved in activation of SRC-dependent MAPK signaling on hormone stimulation. The protein is Progesterone receptor (PGR) of Pan troglodytes (Chimpanzee).